A 50-amino-acid chain; its full sequence is Ornatin-E (50 aa).

The short motif at 42-44 is the Cell attachment site element; that stretch reads RGD.

The protein belongs to the ornatin family.

The protein resides in the secreted. Functionally, potent inhibitor of fibrinogen interaction with platelet receptors expressed on glycoprotein IIb-IIIa complex. May prevent blood from clotting during either feeding and/or storage of ingested blood. This is Ornatin-E from Placobdella ornata (Turtle leech).